Reading from the N-terminus, the 1464-residue chain is Neuropathy target esterase sws (1464 aa).

At 1-34 (MDVLELLRASATGCYNTIFSEAWHQYVHKQIAAA) the chain is on the lumenal side. The chain crosses the membrane as a helical span at residues 35–55 (VYWYGALFLLGVLLFVWFLYF). Residues 56-1464 (KRLARLRLRD…GNTTNNDTKN (1409 aa)) lie on the Cytoplasmic side of the membrane. Position 176–303 (176–303 (IFGHFEKPIF…IRVIQVIMIR (128 aa))) interacts with a nucleoside 3',5'-cyclic phosphate. Disordered regions lie at residues 329–393 (NKNS…LHYH) and 409–438 (QQQQ…SSPT). The span at 338-367 (TGQTTSNVQSQTSQATQSRPSGTTRTPTSP) shows a compositional bias: low complexity. A compositionally biased stretch (polar residues) spans 409–420 (QQQQSLNSPRRN). The residue at position 421 (Ser421) is a Phosphoserine. The segment covering 422–438 (TAHVSEAAAASTASSPT) has biased composition (low complexity). A nucleoside 3',5'-cyclic phosphate-binding positions include 456 to 586 (ELGL…VVRR) and 575 to 702 (IVLG…LSHR). The PNPLA domain maps to 928–1094 (LVLGGGGARG…VNNLPGHLWR (167 aa)). The GXGXXG signature appears at 932–937 (GGGARG). The short motif at 959-963 (GVSIG) is the GXSXG element. Catalysis depends on Ser961, which acts as the Nucleophile. The active-site Proton acceptor is the Asp1081. The short motif at 1081–1083 (DGG) is the DGA/G element. A Phosphoserine modification is found at Ser1175. Disordered regions lie at residues 1352 to 1374 (VDKA…PTPS) and 1400 to 1464 (ATNT…DTKN). Positions 1429–1444 (KRTEQDEHELEHEQVV) are enriched in basic and acidic residues. Over residues 1450 to 1464 (MDKQQGNTTNNDTKN) the composition is skewed to polar residues.

The protein belongs to the NTE family. In terms of assembly, interacts with Pka-C3; interaction inhibits the catalytic function of Pka-C3 and the esterase activity of sws.

The protein resides in the endoplasmic reticulum membrane. The catalysed reaction is a 1-acyl-sn-glycero-3-phosphocholine + H2O = sn-glycerol 3-phosphocholine + a fatty acid + H(+). Its function is as follows. Phospholipase B that deacylates intracellular phosphatidylcholine (PtdCho), generating glycerophosphocholine (GroPtdCho). This deacylation occurs at both sn-2 and sn-1 positions of PtdCho. Its specific chemical modification by certain organophosphorus (OP) compounds leads to distal axonopathy. Plays a role in the signaling mechanism between neurons and glia that regulates glia wrapping during development of the adult brain. Essential for membrane lipid homeostasis and cell survival in both neurons and glia of the adult brain. This Drosophila grimshawi (Hawaiian fruit fly) protein is Neuropathy target esterase sws.